The primary structure comprises 240 residues: Protein unc-119 homolog A (240 aa).

Over residues 1 to 11 (MKVKKGGGGAG) the composition is skewed to gly residues. The segment at 1–59 (MKVKKGGGGAGTATESAPGPSGQSVAPIPQPPAESESGSESEPDAGPGPRPGPLQRKQP) is required for midbody localization. The interval 1 to 61 (MKVKKGGGGA…GPLQRKQPIG (61 aa)) is disordered. Phosphoserine; by CK2 occurs at positions 37, 39, and 41. Residues 121–240 (LDPNAGRFVR…KADYSYSGTP (120 aa)) form a required for centrosome localization region. Tetradecanoate is bound at residue Y131.

This sequence belongs to the PDE6D/unc-119 family. Interacts with CABP4; in the absence of calcium. Interacts with DNM1; leading to a decrease of DNM1 GTPase activity. May interact with GTP-bound ARL1. Interacts with ARL2 and ARL3 (GTP-bound forms); this promotes the release of myyristoylated cargo proteins. Found in a complex with ARL3, RP2 and UNC119; RP2 induces hydrolysis of GTP ARL3 in the complex, leading to the release of UNC119. Interacts with NPHP3 (when myristoylated). Interacts with CYS1 (when myristoylated). Interacts with MACIR; interaction only takes place when UNC119 is not liganded with myristoylated proteins. Interacts with LCK; this interaction plays a crucial role in activation of LCK. Interacts with FYN. Interacts with RAB11A; in a cell cycle-dependent manner. Interacts with LYN (via SH2 and SH3 domains); leading to LYN activation. Found in a complex with ABL1, ABL2, CRK and UNC119; leading to the inhibition of CRK phosphorylation by ABL kinases. Interacts with CD44; leading to Shigella invasion. Interacts with KLHL18 (via kelch repeats). Interacts with PPP3CA, PPP3CB and PPP3CC. Interacts with USP48; this interaction promotes UNC119 stability. Post-translationally, phosphorylation suppresses its interaction with KLHL18 and down-regulates its KLHL18-mediated degradation. Phosphorylated more under light conditions than dark conditions. Dephosphorylated by calcineurin. In terms of tissue distribution, abundantly expressed in retina, in photoreceptor synapses and inner segments. Expressed in a much lesser extent in several other tissues.

It is found in the cytoplasm. The protein resides in the cytoskeleton. Its subcellular location is the microtubule organizing center. It localises to the centrosome. The protein localises to the spindle pole. It is found in the spindle. Involved in synaptic functions in photoreceptor cells, the signal transduction in immune cells as a Src family kinase activator, endosome recycling, the uptake of bacteria and endocytosis, protein trafficking in sensory neurons and as lipid-binding chaperone with specificity for a diverse subset of myristoylated proteins. Specifically binds the myristoyl moiety of a subset of N-terminally myristoylated proteins and is required for their localization. Binds myristoylated GNAT1 and is required for G-protein localization and trafficking in sensory neurons. Probably plays a role in trafficking proteins in photoreceptor cells. Plays important roles in mediating Src family kinase signals for the completion of cytokinesis via RAB11A. This Homo sapiens (Human) protein is Protein unc-119 homolog A (UNC119).